The primary structure comprises 403 residues: Histidine--tRNA ligase (403 aa).

The protein belongs to the class-II aminoacyl-tRNA synthetase family. Homodimer.

The protein resides in the cytoplasm. The catalysed reaction is tRNA(His) + L-histidine + ATP = L-histidyl-tRNA(His) + AMP + diphosphate + H(+). This chain is Histidine--tRNA ligase, found in Sulfurimonas denitrificans (strain ATCC 33889 / DSM 1251) (Thiomicrospira denitrificans (strain ATCC 33889 / DSM 1251)).